Consider the following 909-residue polypeptide: GTPase activating protein homolog 4 (909 aa).

One can recognise an F-BAR domain in the interval Met-1 to Cys-257. Positions Ile-322 to Ser-513 constitute a Rho-GAP domain. Positions Ile-529–Ser-909 are disordered. Low complexity-rich tracts occupy residues Ser-533 to Asn-562 and Ser-571 to Gln-602. The segment covering Ser-609–Phe-625 has biased composition (pro residues). Residues Gln-651 to Gln-674 show a composition bias toward polar residues. Residues Lys-672–Ser-809 adopt a coiled-coil conformation. Residues Leu-675–Lys-716 show a composition bias toward basic and acidic residues. A compositionally biased stretch (low complexity) spans Ser-723 to Ser-741. Residues Asn-742 to Ile-765 show a composition bias toward basic and acidic residues. The segment covering Ala-767 to Ser-785 has biased composition (polar residues). 2 stretches are compositionally biased toward low complexity: residues Gln-786–Ser-828 and Ser-843–Ser-892.

It localises to the cytoplasm. Its subcellular location is the contractile vacuole. Functionally, rho GTPase-activating protein involved in the signal transduction pathway. The protein is GTPase activating protein homolog 4 (mgp4) of Dictyostelium discoideum (Social amoeba).